Here is a 111-residue protein sequence, read N- to C-terminus: Cytochrome c (111 aa).

A1 carries the N-acetylalanine modification. Heme c-binding residues include C22, C25, and H26. K80 bears the N6,N6,N6-trimethyllysine mark. M88 is a binding site for heme c. K94 is modified (N6,N6,N6-trimethyllysine).

This sequence belongs to the cytochrome c family. Post-translationally, binds 1 heme c group covalently per subunit.

The protein localises to the mitochondrion intermembrane space. In terms of biological role, electron carrier protein. The oxidized form of the cytochrome c heme group can accept an electron from the heme group of the cytochrome c1 subunit of cytochrome reductase. Cytochrome c then transfers this electron to the cytochrome oxidase complex, the final protein carrier in the mitochondrial electron-transport chain. The protein is Cytochrome c of Cucurbita maxima (Pumpkin).